The primary structure comprises 292 residues: Pyridoxal 5'-phosphate synthase subunit PdxS (292 aa).

A D-ribose 5-phosphate-binding site is contributed by Asp-22. The active-site Schiff-base intermediate with D-ribose 5-phosphate is the Lys-79. Residue Gly-151 participates in D-ribose 5-phosphate binding. D-glyceraldehyde 3-phosphate is bound at residue Arg-163. D-ribose 5-phosphate-binding positions include Gly-212 and 233–234 (GS).

This sequence belongs to the PdxS/SNZ family. In the presence of PdxT, forms a dodecamer of heterodimers.

It carries out the reaction aldehydo-D-ribose 5-phosphate + D-glyceraldehyde 3-phosphate + L-glutamine = pyridoxal 5'-phosphate + L-glutamate + phosphate + 3 H2O + H(+). Its pathway is cofactor biosynthesis; pyridoxal 5'-phosphate biosynthesis. Functionally, catalyzes the formation of pyridoxal 5'-phosphate from ribose 5-phosphate (RBP), glyceraldehyde 3-phosphate (G3P) and ammonia. The ammonia is provided by the PdxT subunit. Can also use ribulose 5-phosphate and dihydroxyacetone phosphate as substrates, resulting from enzyme-catalyzed isomerization of RBP and G3P, respectively. The protein is Pyridoxal 5'-phosphate synthase subunit PdxS of Thermoanaerobacter pseudethanolicus (strain ATCC 33223 / 39E) (Clostridium thermohydrosulfuricum).